Reading from the N-terminus, the 444-residue chain is C4-dicarboxylate transport protein (444 aa).

9 consecutive transmembrane segments (helical) span residues 15–35, 46–66, 78–98, 143–163, 199–219, 224–244, 291–311, 332–352, and 354–374; these read VIVA…FGVA, LIKM…IAGM, YALL…LIVV, IVGA…VIFG, PIGA…GSLV, LMIC…GGIA, VVGL…AIYL, ITLL…TGSG, and IVLA…LALI. Residues 422–444 are disordered; the sequence is GIADTRPEDDLGVAEGPTPSNVK.

Belongs to the dicarboxylate/amino acid:cation symporter (DAACS) (TC 2.A.23) family.

It is found in the cell inner membrane. Functionally, responsible for the transport of dicarboxylates such as succinate, fumarate, and malate from the periplasm across the membrane. This is C4-dicarboxylate transport protein from Pseudomonas fluorescens (strain Pf0-1).